A 244-amino-acid chain; its full sequence is Phosphoribosylaminoimidazole-succinocarboxamide synthase (244 aa).

It belongs to the SAICAR synthetase family.

The catalysed reaction is 5-amino-1-(5-phospho-D-ribosyl)imidazole-4-carboxylate + L-aspartate + ATP = (2S)-2-[5-amino-1-(5-phospho-beta-D-ribosyl)imidazole-4-carboxamido]succinate + ADP + phosphate + 2 H(+). It participates in purine metabolism; IMP biosynthesis via de novo pathway; 5-amino-1-(5-phospho-D-ribosyl)imidazole-4-carboxamide from 5-amino-1-(5-phospho-D-ribosyl)imidazole-4-carboxylate: step 1/2. The protein is Phosphoribosylaminoimidazole-succinocarboxamide synthase of Prochlorococcus marinus (strain SARG / CCMP1375 / SS120).